The sequence spans 562 residues: Glutamate--tRNA ligase (562 aa).

The 'HIGH' region signature appears at 90–100; it reads PNPSGLLHIGH.

Belongs to the class-I aminoacyl-tRNA synthetase family. Glutamate--tRNA ligase type 2 subfamily.

It localises to the cytoplasm. It catalyses the reaction tRNA(Glu) + L-glutamate + ATP = L-glutamyl-tRNA(Glu) + AMP + diphosphate. Its function is as follows. Catalyzes the attachment of glutamate to tRNA(Glu) in a two-step reaction: glutamate is first activated by ATP to form Glu-AMP and then transferred to the acceptor end of tRNA(Glu). In Nanoarchaeum equitans (strain Kin4-M), this protein is Glutamate--tRNA ligase.